The chain runs to 345 residues: MTQSFKTPTQTPLLGLSLAKLTEWVQQQGQPAYRGKQLYQWIYQKGAKSLADITVFSKQWREEISNFPIGRSVIHHRSVAPDATVKYLLKLSDGNIIETVGIPTYKRLTVCVSSQVGCPMACDFCATGKGGFSRNLEAHEIIDQVLTVQEDFERRVSHIVFMGMGEPLLNTKNVLAAVRSLNQDLGIGQRLITISTSGIRDRIRQLAQHKLQVTLAVSLHASNQRLREHLIPSAKFYPLADLISECREYVKITKRRISFEYILLASFNDLPDHARELAKNMRGFQCHVNLIPYNPISEVDYQRPTQEMIKTFANALAEQNIAVSIRYSRGLEANAACGQLRASRV.

Residue Glu98 is the Proton acceptor of the active site. The Radical SAM core domain maps to 104–332 (TYKRLTVCVS…VSIRYSRGLE (229 aa)). The cysteines at positions 111 and 337 are disulfide-linked. The [4Fe-4S] cluster site is built by Cys118, Cys122, and Cys125. S-adenosyl-L-methionine is bound by residues 165–166 (GE), Ser195, 218–220 (SLH), and Asn294. Cys337 serves as the catalytic S-methylcysteine intermediate.

Belongs to the radical SAM superfamily. RlmN family. It depends on [4Fe-4S] cluster as a cofactor.

It localises to the cytoplasm. The enzyme catalyses adenosine(2503) in 23S rRNA + 2 reduced [2Fe-2S]-[ferredoxin] + 2 S-adenosyl-L-methionine = 2-methyladenosine(2503) in 23S rRNA + 5'-deoxyadenosine + L-methionine + 2 oxidized [2Fe-2S]-[ferredoxin] + S-adenosyl-L-homocysteine. It carries out the reaction adenosine(37) in tRNA + 2 reduced [2Fe-2S]-[ferredoxin] + 2 S-adenosyl-L-methionine = 2-methyladenosine(37) in tRNA + 5'-deoxyadenosine + L-methionine + 2 oxidized [2Fe-2S]-[ferredoxin] + S-adenosyl-L-homocysteine. Its function is as follows. Specifically methylates position 2 of adenine 2503 in 23S rRNA and position 2 of adenine 37 in tRNAs. The protein is Probable dual-specificity RNA methyltransferase RlmN of Trichodesmium erythraeum (strain IMS101).